The primary structure comprises 286 residues: 33 kDa chaperonin (286 aa).

2 disulfide bridges follow: Cys225–Cys227 and Cys258–Cys261.

This sequence belongs to the HSP33 family. In terms of processing, under oxidizing conditions two disulfide bonds are formed involving the reactive cysteines. Under reducing conditions zinc is bound to the reactive cysteines and the protein is inactive.

It localises to the cytoplasm. Its function is as follows. Redox regulated molecular chaperone. Protects both thermally unfolding and oxidatively damaged proteins from irreversible aggregation. Plays an important role in the bacterial defense system toward oxidative stress. This chain is 33 kDa chaperonin, found in Shewanella oneidensis (strain ATCC 700550 / JCM 31522 / CIP 106686 / LMG 19005 / NCIMB 14063 / MR-1).